The primary structure comprises 89 residues: Small ribosomal subunit protein uS15 (89 aa).

It belongs to the universal ribosomal protein uS15 family. In terms of assembly, part of the 30S ribosomal subunit. Forms a bridge to the 50S subunit in the 70S ribosome, contacting the 23S rRNA.

One of the primary rRNA binding proteins, it binds directly to 16S rRNA where it helps nucleate assembly of the platform of the 30S subunit by binding and bridging several RNA helices of the 16S rRNA. In terms of biological role, forms an intersubunit bridge (bridge B4) with the 23S rRNA of the 50S subunit in the ribosome. This is Small ribosomal subunit protein uS15 from Syntrophomonas wolfei subsp. wolfei (strain DSM 2245B / Goettingen).